The following is a 1240-amino-acid chain: Serine/threonine-protein kinase TAO2 (1240 aa).

Phosphoserine is present on S9. The Protein kinase domain occupies 28-281 (FSDLREIGHG…SEVLLKHRFV (254 aa)). Residues 34–42 (IGHGSFGAV) and K57 contribute to the ATP site. D151 acts as the Proton acceptor in catalysis. Position 181 is a phosphoserine (S181). The disordered stretch occupies residues 320 to 463 (APNGPGAEAP…PTSTSSSARR (144 aa)). Positions 356 to 380 (SSHSVPSMSISASSQSSSVNSLADA) are enriched in low complexity. The segment covering 381–401 (SDNEEEEEEEEEEEEEEEEEG) has biased composition (acidic residues). Residues 402–417 (PESREMAMMQEGEHTV) are compositionally biased toward basic and acidic residues. Residue S422 is modified to Phosphoserine. Coiled-coil stretches lie at residues 493 to 528 (SALR…EEHS) and 581 to 608 (KELA…LQEN). S663 bears the Phosphoserine mark. The stretch at 688–720 (LRQHEATRELELRQLQAVQRTRAELTRLQHQTE) forms a coiled coil. Phosphoserine occurs at positions 782, 830, and 832. The stretch at 805–934 (RILGKEGTTL…GDGCPSPDIP (130 aa)) forms a coiled coil. The interval 899 to 946 (VLTPVPEEEEEEEEEGGAPIGTHRDPGDGCPSPDIPPEPPPSHLRQYP) is disordered. Over residues 904–914 (PEEEEEEEEEG) the composition is skewed to acidic residues. Residues 931–940 (PDIPPEPPPS) are compositionally biased toward pro residues. Transmembrane regions (helical) follow at residues 972 to 992 (LLPL…GGGL), 994 to 1014 (AALL…LFLC), 1019 to 1039 (LPPG…VLSL), 1045 to 1065 (LMGV…SLAL), and 1175 to 1195 (LASC…LLKG). Residue L999 is modified to Omega-N-methylarginine. At L1037 the chain carries Phosphoserine. The interval 1212–1240 (LGLSASRQLPPGTVAGRRSQTRRTLPPWR) is disordered.

The protein belongs to the protein kinase superfamily. STE Ser/Thr protein kinase family. STE20 subfamily. In terms of assembly, interacts with MAP2K3 and MAP2K6. Self-associates. Interacts with tubulins. Interacts with MAP3K7 and interferes with MAP3K7-binding to CHUK and thus prevents NF-kappa-B activation. Isoform 2 interacts with PCDH8; this complex may also include CDH2. The cofactor is Mg(2+). Autophosphorylated. Phosphorylated by ATM. In terms of processing, phosphorylated on Ser-1037 by MAPK14. This phosphorylation is required PCDH8 for endocytosis.

Its subcellular location is the cytoplasmic vesicle membrane. The protein resides in the cytoplasm. The protein localises to the cytoskeleton. It localises to the cell projection. It is found in the dendrite. It catalyses the reaction L-seryl-[protein] + ATP = O-phospho-L-seryl-[protein] + ADP + H(+). The catalysed reaction is L-threonyl-[protein] + ATP = O-phospho-L-threonyl-[protein] + ADP + H(+). In terms of biological role, serine/threonine-protein kinase involved in different processes such as membrane blebbing and apoptotic bodies formation DNA damage response and MAPK14/p38 MAPK stress-activated MAPK cascade. Phosphorylates itself, MBP, activated MAPK8, MAP2K3, MAP2K6 and tubulins. Activates the MAPK14/p38 MAPK signaling pathway through the specific activation and phosphorylation of the upstream MAP2K3 and MAP2K6 kinases. In response to DNA damage, involved in the G2/M transition DNA damage checkpoint by activating the p38/MAPK14 stress-activated MAPK cascade, probably by mediating phosphorylation of upstream MAP2K3 and MAP2K6 kinases. May affect microtubule organization and stability. May play a role in the osmotic stress-MAPK8 pathway. Prevents MAP3K7-mediated activation of CHUK, and thus NF-kappa-B activation. Isoform 2, but not isoform 1, is required for PCDH8 endocytosis. Following homophilic interactions between PCDH8 extracellular domains, isoform 2 phosphorylates and activates MAPK14/p38 MAPK which in turn phosphorylates isoform 2. This process leads to PCDH8 endocytosis and CDH2 cointernalization. Both isoforms are involved in MAPK14/p38 MAPK activation. The chain is Serine/threonine-protein kinase TAO2 (Taok2) from Mus musculus (Mouse).